A 146-amino-acid chain; its full sequence is Hemoglobin subunit beta (146 aa).

Position 1 is an N-acetylvaline (valine 1). The 145-residue stretch at 2–146 (HLTDAEKNLV…VANALAHKYH (145 aa)) folds into the Globin domain. Histidine 63 is a heme b binding site. An N6-acetyllysine modification is found at lysine 82. Position 92 (histidine 92) interacts with heme b. Cysteine 93 carries the S-nitrosocysteine modification. N6-acetyllysine is present on lysine 144.

It belongs to the globin family. As to quaternary structure, heterotetramer of two alpha chains and two beta chains. Red blood cells.

Functionally, involved in oxygen transport from the lung to the various peripheral tissues. This Mesocricetus brandti (Brandt's hamster) protein is Hemoglobin subunit beta (HBB).